Here is a 1145-residue protein sequence, read N- to C-terminus: Nucleolar protein 6 (1145 aa).

Residues 1-46 (MQKKRNRAGPPQQEAASDDGEMSDSSDKMEVAQGKGKSAVKRAPDA) are disordered.

This sequence belongs to the NRAP family. In terms of assembly, part of the small subunit (SSU) processome, composed of more than 70 proteins and the RNA chaperone small nucleolar RNA (snoRNA) U3.

It localises to the nucleus. The protein localises to the nucleolus. The protein resides in the chromosome. Part of the small subunit (SSU) processome, first precursor of the small eukaryotic ribosomal subunit. During the assembly of the SSU processome in the nucleolus, many ribosome biogenesis factors, an RNA chaperone and ribosomal proteins associate with the nascent pre-rRNA and work in concert to generate RNA folding, modifications, rearrangements and cleavage as well as targeted degradation of pre-ribosomal RNA by the RNA exosome. This is Nucleolar protein 6 (nol6) from Xenopus tropicalis (Western clawed frog).